We begin with the raw amino-acid sequence, 308 residues long: Extended-spectrum beta-lactamase PER-1 (308 aa).

Positions 1-26 are cleaved as a signal peptide; it reads MNVIIKAVVTASTLLMVSFSSFETSA. Catalysis depends on Ser-71, which acts as the Nucleophile; acyl-ester intermediate. Residues Lys-74, Ser-135, and Glu-171 each contribute to the a beta-lactam site.

The protein belongs to the class-A beta-lactamase family. Monomer.

The protein localises to the secreted. It catalyses the reaction a beta-lactam + H2O = a substituted beta-amino acid. With respect to regulation, inhibited by the beta-lactamase-blocking agents clavulanic acid, tazobactam and sulbactam. Not inhibited by EDTA. Functionally, extended-spectrum beta-lactamase (ESBL) which confers resistance to penicillins, as well as first-, second- and third-generation cephalosporins, but not the carbapenem, imipenem, in the JM109 strain of E.coli. Has cefotaxime-hydrolyzing activity. The protein is Extended-spectrum beta-lactamase PER-1 of Pseudomonas aeruginosa.